We begin with the raw amino-acid sequence, 339 residues long: Putative zinc metalloprotease CA_C1796 (339 aa).

Residue H20 participates in Zn(2+) binding. E21 is a catalytic residue. H24 is a Zn(2+) binding site. 3 consecutive transmembrane segments (helical) span residues 91–113 (LSIV…CIVG), 275–297 (QLGV…LFLF), and 310–330 (VGFV…VVTI). One can recognise a PDZ domain in the interval 99–177 (IMNLILAAVL…GIKLALKNNG (79 aa)).

The protein belongs to the peptidase M50B family. Zn(2+) is required as a cofactor.

Its subcellular location is the cell membrane. The sequence is that of Putative zinc metalloprotease CA_C1796 from Clostridium acetobutylicum (strain ATCC 824 / DSM 792 / JCM 1419 / IAM 19013 / LMG 5710 / NBRC 13948 / NRRL B-527 / VKM B-1787 / 2291 / W).